An 842-amino-acid polypeptide reads, in one-letter code: Protein translocase subunit SecA (842 aa).

Residues Q85, 103–107 (GEGKT), and D493 contribute to the ATP site. Zn(2+) contacts are provided by C825, C827, C836, and H837.

It belongs to the SecA family. Monomer and homodimer. Part of the essential Sec protein translocation apparatus which comprises SecA, SecYEG and auxiliary proteins SecDF. Other proteins may also be involved. Requires Zn(2+) as cofactor.

It localises to the cell membrane. The protein localises to the cytoplasm. It catalyses the reaction ATP + H2O + cellular proteinSide 1 = ADP + phosphate + cellular proteinSide 2.. In terms of biological role, part of the Sec protein translocase complex. Interacts with the SecYEG preprotein conducting channel. Has a central role in coupling the hydrolysis of ATP to the transfer of proteins into and across the cell membrane, serving as an ATP-driven molecular motor driving the stepwise translocation of polypeptide chains across the membrane. This chain is Protein translocase subunit SecA, found in Streptococcus uberis (strain ATCC BAA-854 / 0140J).